The following is a 329-amino-acid chain: tRNA pseudouridine synthase B (329 aa).

Histidine 43 provides a ligand contact to substrate. Aspartate 48 acts as the Nucleophile in catalysis. Tyrosine 76, tyrosine 179, and leucine 200 together coordinate substrate.

It belongs to the pseudouridine synthase TruB family. Type 1 subfamily.

It carries out the reaction uridine(55) in tRNA = pseudouridine(55) in tRNA. Responsible for synthesis of pseudouridine from uracil-55 in the psi GC loop of transfer RNAs. The polypeptide is tRNA pseudouridine synthase B (Yersinia enterocolitica serotype O:8 / biotype 1B (strain NCTC 13174 / 8081)).